The sequence spans 141 residues: Hemoglobin subunit alpha (141 aa).

The Globin domain occupies 1–141 (VLSAADKTHV…VSTVLVSKYR (141 aa)). S3 is subject to Phosphoserine. An N6-succinyllysine modification is found at K7. Residue T8 is modified to Phosphothreonine. At K11 the chain carries N6-succinyllysine. N6-acetyllysine; alternate is present on K16. Residue K16 is modified to N6-succinyllysine; alternate. S35 carries the phosphoserine modification. At K40 the chain carries N6-succinyllysine. S49 is subject to Phosphoserine. Residue H58 participates in O2 binding. H87 is a heme b binding site. S102 bears the Phosphoserine mark. Residue T108 is modified to Phosphothreonine. S124 carries the post-translational modification Phosphoserine. T134 is modified (phosphothreonine). A Phosphoserine modification is found at S138.

Belongs to the globin family. Heterotetramer of two alpha chains and two beta chains. As to expression, red blood cells.

In terms of biological role, involved in oxygen transport from the lung to the various peripheral tissues. Its function is as follows. Hemopressin acts as an antagonist peptide of the cannabinoid receptor CNR1. Hemopressin-binding efficiently blocks cannabinoid receptor CNR1 and subsequent signaling. This Dasypus novemcinctus (Nine-banded armadillo) protein is Hemoglobin subunit alpha (HBA).